The following is a 336-amino-acid chain: Aspartate--ammonia ligase (336 aa).

This sequence belongs to the class-II aminoacyl-tRNA synthetase family. AsnA subfamily.

Its subcellular location is the cytoplasm. The enzyme catalyses L-aspartate + NH4(+) + ATP = L-asparagine + AMP + diphosphate + H(+). Its pathway is amino-acid biosynthesis; L-asparagine biosynthesis; L-asparagine from L-aspartate (ammonia route): step 1/1. The protein is Aspartate--ammonia ligase of Clostridium perfringens (strain 13 / Type A).